The primary structure comprises 84 residues: FMRFamide-like neuropeptides 26 (84 aa).

A signal peptide spans 1–19 (MKVMFMLALLFSSLVATSA). The propeptide occupies 20 to 48 (FRLPFQFFGANEDFNSGLTKRNYYESKPY). Phenylalanine 61 and phenylalanine 82 each carry phenylalanine amide.

It belongs to the FARP (FMRFamide related peptide) family. In terms of tissue distribution, each flp gene is expressed in a distinct set of neurons.

It is found in the secreted. Its function is as follows. FMRFamides and FMRFamide-like peptides are neuropeptides. The polypeptide is FMRFamide-like neuropeptides 26 (Caenorhabditis elegans).